The primary structure comprises 1062 residues: Protein P1-P2 (1062 aa).

The first 20 residues, 1-20 (MNRFTAYAALFFMFSLCSTA), serve as a signal peptide directing secretion. 3 helical membrane passes run 121–141 (AASV…WTLA), 144–164 (ITLF…LGCI), and 172–192 (ALSL…KIIW). The region spanning 207-399 (VEGYKGFSVP…GITSPNYVFE (193 aa)) is the Peptidase S39 domain. Residues His-255, Asp-286, and Ser-354 each act as for protease activity in the active site. The disordered stretch occupies residues 455–560 (ATNAPAEKTA…QTKEARKAWR (106 aa)). The span at 463–484 (TAQTNSAEKTAPSTSAEKTALT) shows a compositional bias: polar residues. The segment covering 497 to 511 (QNKRQLRHPRRRYKR) has biased composition (basic residues). Over residues 551–560 (QTKEARKAWR) the composition is skewed to basic and acidic residues. The region spanning 859 to 974 (EYTRPTDCSG…APNSDLEEYK (116 aa)) is the RdRp catalytic domain.

Specific enzymatic cleavages in vivo yield mature proteins. The protease probably cleaves itself and releases the RdRp (Potential). Cleavages have been shown in the P1 protein, but since the N-terminus containing the serine protease is shared between P1 and P1-P2, cleavages should also occur within the P1-P2 protein.

It is found in the membrane. It catalyses the reaction RNA(n) + a ribonucleoside 5'-triphosphate = RNA(n+1) + diphosphate. In terms of biological role, precursor from which the RNA-dependent RNA polymerase (RdRp) is probably released. RNA-dependent RNA polymerase plays an essential role in virus replication (Potential). This Potato leafroll virus (strain Potato/Scotland/strain 1/1984) (PLrV) protein is Protein P1-P2.